We begin with the raw amino-acid sequence, 74 residues long: ATP synthase subunit 9, mitochondrial (74 aa).

2 helical membrane-spanning segments follow: residues 8-28 (IGAG…GNVF) and 45-72 (LFGY…LILF).

It belongs to the ATPase C chain family. F-type ATPases have 2 components, CF(1) - the catalytic core - and CF(0) - the membrane proton channel. CF(1) has five subunits: alpha(3), beta(3), gamma(1), delta(1), epsilon(1). CF(0) has three main subunits: a, b and c.

It localises to the mitochondrion membrane. Functionally, this protein is one of the chains of the nonenzymatic membrane component (F0) of mitochondrial ATPase. This Pisum sativum (Garden pea) protein is ATP synthase subunit 9, mitochondrial (ATP9).